The following is a 375-amino-acid chain: Alanine racemase, catabolic (375 aa).

The active-site Proton acceptor; specific for D-alanine is the lysine 38. Lysine 38 carries the post-translational modification N6-(pyridoxal phosphate)lysine. Catalysis depends on tyrosine 269, which acts as the Proton acceptor; specific for L-alanine.

The protein belongs to the alanine racemase family. The cofactor is pyridoxal 5'-phosphate.

It carries out the reaction L-alanine = D-alanine. The protein operates within amino-acid biosynthesis; D-alanine biosynthesis; D-alanine from L-alanine: step 1/1. This is Alanine racemase, catabolic (alr1) from Schizosaccharomyces pombe (strain 972 / ATCC 24843) (Fission yeast).